Consider the following 492-residue polypeptide: Cytochrome P450 monooxygenase rdc4 (492 aa).

Cys435 is a binding site for heme.

It belongs to the cytochrome P450 family. Heme is required as a cofactor.

It participates in secondary metabolite biosynthesis. In terms of biological role, cytochrome P450 monooxygenase; part of the gene cluster that mediates the biosynthesis of radicicol, a resorcylic acid lactone (RAL) that irreversibly inhibits the HSP90 molecular chaperone, an important target for cancer chemotherapy. The radicicol cluster encodes only two apparent post-PKS enzymes, a cytochrome P450 monooxygenase (rdc4) and a non-heme halogenase (rdc2) that could introduce the epoxide and the chlorine, respectively. If this cluster includes all the genes required for radicicol biosynthesis, the remaining structural features of radicicol are presumably generated by the PKSs rdc1 and rdc5. The C-2' ketone could arise if the R-PKS rdc5 and NR-PKS rdc1 each carry out four iterations, in contrast to the five iteration-three iteration split for the hypothemycin PKSs. The origin of the cis 5',6' double bond is not known. The radicicol R-PKS rdc5 ER domain may catalyze either double bond isomerization or reduction in the third iteration. This chain is Cytochrome P450 monooxygenase rdc4, found in Metacordyceps chlamydosporia (Nematophagous fungus).